A 422-amino-acid polypeptide reads, in one-letter code: Elongation factor 1-alpha (422 aa).

Residues 5 to 221 (KPHMNLAVIG…NSLKEPEKPS (217 aa)) enclose the tr-type G domain. A G1 region spans residues 14–21 (GHIDHGKS). 14 to 21 (GHIDHGKS) is a GTP binding site. Mg(2+) is bound at residue S21. A G2 region spans residues 70 to 74 (GITID). The interval 91–94 (DCPG) is G3. GTP-binding positions include 91–95 (DCPGH) and 146–149 (NKMD). Positions 146-149 (NKMD) are G4. The G5 stretch occupies residues 185-187 (SAF).

This sequence belongs to the TRAFAC class translation factor GTPase superfamily. Classic translation factor GTPase family. EF-Tu/EF-1A subfamily.

Its subcellular location is the cytoplasm. The catalysed reaction is GTP + H2O = GDP + phosphate + H(+). In terms of biological role, GTP hydrolase that promotes the GTP-dependent binding of aminoacyl-tRNA to the A-site of ribosomes during protein biosynthesis. The polypeptide is Elongation factor 1-alpha (Methanosarcina mazei (strain ATCC BAA-159 / DSM 3647 / Goe1 / Go1 / JCM 11833 / OCM 88) (Methanosarcina frisia)).